A 101-amino-acid chain; its full sequence is Ascorbate-specific PTS system EIIB component (101 aa).

In terms of domain architecture, PTS EIIB type-2 spans 3 to 96 (VRILAVCGNG…KLLEVIKEHF (94 aa)). C9 functions as the Phosphocysteine intermediate in the catalytic mechanism. The residue at position 9 (C9) is a Phosphocysteine.

The protein resides in the cytoplasm. The enzyme catalyses N(pros)-phospho-L-histidyl-[protein] + L-ascorbate(out) = L-ascorbate 6-phosphate(in) + L-histidyl-[protein]. The phosphoenolpyruvate-dependent sugar phosphotransferase system (sugar PTS), a major carbohydrate active transport system, catalyzes the phosphorylation of incoming sugar substrates concomitantly with their translocation across the cell membrane. The enzyme II UlaABC PTS system is involved in ascorbate transport. The polypeptide is Ascorbate-specific PTS system EIIB component (ulaB) (Salmonella choleraesuis (strain SC-B67)).